Consider the following 336-residue polypeptide: HTH-type transcriptional repressor PurR (336 aa).

Positions 2-56 (ATIKDVAKLAGVSTTTVSHVINKTRFVAEDTSKAVWDAIQQLNYSPSAVARSLKV) constitute an HTH lacI-type domain. The segment at residues 4-23 (IKDVAKLAGVSTTTVSHVIN) is a DNA-binding region (H-T-H motif). A DNA-binding region spans residues 48–56 (SAVARSLKV). Positions 73, 188, 219, and 273 each coordinate hypoxanthine.

As to quaternary structure, homodimer.

It functions in the pathway purine metabolism; purine nucleotide biosynthesis [regulation]. Its function is as follows. Is the main repressor of the genes involved in the de novo synthesis of purine nucleotides, regulating purB, purC, purEK, purF, purHD, purL, purMN and guaBA expression. PurR is allosterically activated to bind its cognate DNA by binding the purine corepressors, hypoxanthine or guanine, thereby effecting transcription repression. This Actinobacillus pleuropneumoniae serotype 3 (strain JL03) protein is HTH-type transcriptional repressor PurR.